The chain runs to 1592 residues: Autophagy-related protein 2 (1592 aa).

The interval 2 to 21 is ER-targeting domain; sequence AFWLPQNIQKRLLLYVLQQI. Phosphoserine is present on S236. S249 is subject to Phosphoserine; by ATG1. Positions 264-286 are disordered; it reads AMEEQSNEDPSEPQVTQEEQEND. Residues 1049 to 1075 adopt a coiled-coil conformation; that stretch reads TRKFIANTVEKLDKELSKAEASSSKSN. The residue at position 1086 (S1086) is a Phosphoserine; by ATG1. Positions 1347 to 1373 are PAS-targeting domain; that stretch reads APVRSFMAIGSGVKTLVTVLMSEYRQE.

Belongs to the ATG2 family. As to quaternary structure, interacts with ATG18. Interacts with ATG9.

The protein localises to the preautophagosomal structure membrane. The protein resides in the endoplasmic reticulum membrane. It carries out the reaction a 1,2-diacyl-sn-glycero-3-phosphocholine(in) = a 1,2-diacyl-sn-glycero-3-phosphocholine(out). The catalysed reaction is a 1,2-diacyl-sn-glycero-3-phospho-L-serine(in) = a 1,2-diacyl-sn-glycero-3-phospho-L-serine(out). The enzyme catalyses a 1,2-diacyl-sn-glycero-3-phosphoethanolamine(in) = a 1,2-diacyl-sn-glycero-3-phosphoethanolamine(out). Its function is as follows. Lipid transfer protein required for autophagosome completion and peroxisome degradation. Tethers the edge of the isolation membrane (IM) to the endoplasmic reticulum (ER) and mediates direct lipid transfer from ER to IM for IM expansion. ATG2 binds to the ER exit site (ERES), which is the membrane source for autophagosome formation, using basic residues in its N-terminal region (NR) and to the expanding edge of the IM through its C-terminal region. The latter binding is assisted by an ATG18-PtdIns3P interaction. ATG2 then extracts phospholipids from the membrane source using its NR and transfers them to ATG9 to the IM through its predicted beta-sheet-rich structure for membrane expansion. ATG2 is also involved in the recruitment of lipids to a restricted region close to the vacuole, termed the vacuole-isolation membrane contact site (VICS), which is also essential for autophagosome formation. Necessary for the localization of ATG18 to the preautophagosomal structure (PAS) and the binding of ATG18 to ATG9. ATG2 is the most downstream ATG protein in the preautophagosomal structure organization process. Involved in correct ATG9 trafficking through the preautophagosomal structure and in peroxisome degradation. Plays a significant role in life span extension. This is Autophagy-related protein 2 (ATG2) from Saccharomyces cerevisiae (strain ATCC 204508 / S288c) (Baker's yeast).